The sequence spans 259 residues: Deoxyribose-phosphate aldolase (259 aa).

D102 functions as the Proton donor/acceptor in the catalytic mechanism. Residue K167 is the Schiff-base intermediate with acetaldehyde of the active site. K201 functions as the Proton donor/acceptor in the catalytic mechanism.

This sequence belongs to the DeoC/FbaB aldolase family. DeoC type 2 subfamily.

It is found in the cytoplasm. It carries out the reaction 2-deoxy-D-ribose 5-phosphate = D-glyceraldehyde 3-phosphate + acetaldehyde. It participates in carbohydrate degradation; 2-deoxy-D-ribose 1-phosphate degradation; D-glyceraldehyde 3-phosphate and acetaldehyde from 2-deoxy-alpha-D-ribose 1-phosphate: step 2/2. Functionally, catalyzes a reversible aldol reaction between acetaldehyde and D-glyceraldehyde 3-phosphate to generate 2-deoxy-D-ribose 5-phosphate. This is Deoxyribose-phosphate aldolase from Serratia proteamaculans (strain 568).